The primary structure comprises 403 residues: Phosphopentomutase (403 aa).

The Mn(2+) site is built by Asp-13, Asp-298, His-303, Asp-339, His-340, and His-351.

Belongs to the phosphopentomutase family. Mn(2+) is required as a cofactor.

Its subcellular location is the cytoplasm. The catalysed reaction is 2-deoxy-alpha-D-ribose 1-phosphate = 2-deoxy-D-ribose 5-phosphate. The enzyme catalyses alpha-D-ribose 1-phosphate = D-ribose 5-phosphate. Its pathway is carbohydrate degradation; 2-deoxy-D-ribose 1-phosphate degradation; D-glyceraldehyde 3-phosphate and acetaldehyde from 2-deoxy-alpha-D-ribose 1-phosphate: step 1/2. In terms of biological role, isomerase that catalyzes the conversion of deoxy-ribose 1-phosphate (dRib-1-P) and ribose 1-phosphate (Rib-1-P) to deoxy-ribose 5-phosphate (dRib-5-P) and ribose 5-phosphate (Rib-5-P), respectively. This is Phosphopentomutase from Streptococcus thermophilus (strain CNRZ 1066).